Consider the following 184-residue polypeptide: MKKYIKMYLVLLIAIILFITILVIFLISGLFYPEQNPLLPISPPKKKCKTDTDCKDKGHHCVGGFCTNMSCVEAAKYDIKDIKIDPNIRSCNYTPKFYKFSNTTADLQSPFGKSRIDYGWIYSPHSNEDSCQSFCANYPEGCIAWEYDQFSGTTTGECFLYTNPHPVLKYKNGATVMAIPRKVL.

Topologically, residues 1–6 (MKKYIK) are intravirion. A helical membrane pass occupies residues 7 to 27 (MYLVLLIAIILFITILVIFLI). Over 28 to 184 (SGLFYPEQNP…TVMAIPRKVL (157 aa)) the chain is Virion surface.

This sequence belongs to the asfivirus envelope protein p22 family.

Its subcellular location is the virion membrane. It is found in the host cell membrane. This chain is Envelope protein 169, found in Ornithodoros (relapsing fever ticks).